A 241-amino-acid chain; its full sequence is DNA protection during starvation protein 2 (241 aa).

Positions 25–65 (GAQSAGNGVPSTNVNTPAPNTGQSTAQNTNTASPLPYNRAT) are disordered. Polar residues predominate over residues 33–57 (VPSTNVNTPAPNTGQSTAQNTNTAS). Positions 100, 127, and 131 each coordinate Fe cation. The span at 220–229 (TPTDPNTGFD) shows a compositional bias: polar residues. The interval 220 to 241 (TPTDPNTGFDINNGKPVPLRGR) is disordered.

The protein belongs to the Dps family. Homododecamer. The 12 subunits form a hollow sphere into which the mineral iron core of up to 500 Fe(3+) can be deposited.

The protein resides in the cytoplasm. The enzyme catalyses 2 Fe(2+) + H2O2 + 2 H(+) = 2 Fe(3+) + 2 H2O. Protects DNA from oxidative damage by sequestering intracellular Fe(2+) ion and storing it in the form of Fe(3+) oxyhydroxide mineral. One hydrogen peroxide oxidizes two Fe(2+) ions, which prevents hydroxyl radical production by the Fenton reaction. The chain is DNA protection during starvation protein 2 (dps2) from Deinococcus radiodurans (strain ATCC 13939 / DSM 20539 / JCM 16871 / CCUG 27074 / LMG 4051 / NBRC 15346 / NCIMB 9279 / VKM B-1422 / R1).